A 122-amino-acid chain; its full sequence is Acidic phospholipase A2 5 (122 aa).

7 cysteine pairs are disulfide-bonded: Cys-26–Cys-115, Cys-28–Cys-44, Cys-43–Cys-95, Cys-49–Cys-122, Cys-50–Cys-88, Cys-57–Cys-81, and Cys-75–Cys-86. Positions 27, 29, and 31 each coordinate Ca(2+). The active site involves His-47. A Ca(2+)-binding site is contributed by Asp-48. Asp-89 is an active-site residue.

The protein belongs to the phospholipase A2 family. Group II subfamily. D49 sub-subfamily. Monomer (predominant). Non-covalently linked homodimers are also observed. The cofactor is Ca(2+). Expressed by the venom gland.

The protein localises to the secreted. It carries out the reaction a 1,2-diacyl-sn-glycero-3-phosphocholine + H2O = a 1-acyl-sn-glycero-3-phosphocholine + a fatty acid + H(+). With respect to regulation, preincubation with heparin slightly increase the enzymatic activity. Its function is as follows. Snake venom phospholipase A2 (PLA2) that inhibits platelet aggregation induced by ADP, arachidonic acid and PAF. Acts in a enzymatic independent manner on a proteinase-activated receptor (PAR1, F2R) to evoke calcium release through the inositol 1,4,5-trisphosphate receptor (ITPR1, IP3R) and induces mouse aorta contraction. PAR1, phospholipase C and IP3R inhibitors suppress PA2-induced aorta contraction. PLA2 catalyzes the calcium-dependent hydrolysis of the 2-acyl groups in 3-sn-phosphoglycerides. In Trimeresurus stejnegeri (Chinese green tree viper), this protein is Acidic phospholipase A2 5.